We begin with the raw amino-acid sequence, 319 residues long: Taste receptor type 2 member 39 (319 aa).

Residues 1–16 (MAQPSNYWKQDVLPLS) lie on the Extracellular side of the membrane. A helical membrane pass occupies residues 17–37 (ILMLTLVATECTIGIIASGIV). At 38-65 (MAVNAVSWVQKKAISITTRILLLLSVSR) the chain is on the cytoplasmic side. A helical transmembrane segment spans residues 66-86 (IGLQSIMLIEITSSIFNVAFY). The Extracellular segment spans residues 87 to 97 (NSVLYRVSNVS). The N-linked (GlcNAc...) asparagine glycan is linked to asparagine 95. A helical membrane pass occupies residues 98–118 (FVFLNYCSLWFAALLSFFHFV). Over 119–137 (KIANFSYPLFFKLKWRISE) the chain is Cytoplasmic. The helical transmembrane segment at 138 to 158 (LMPWLLWLSVFISFSSSMFFS) threads the bilayer. Topologically, residues 159-194 (KHKFTVNNNNSLSNNICNFTMKLYVVETNVVNVSFL) are extracellular. N-linked (GlcNAc...) asparagine glycans are attached at residues asparagine 167, asparagine 176, and asparagine 190. A helical transmembrane segment spans residues 195–215 (FISGILPPLTMFVATATLLIF). Residues 216-247 (SLRRHTLNMRNSATGSRNPCIEAHMQAIKETS) lie on the Cytoplasmic side of the membrane. The chain crosses the membrane as a helical span at residues 248–268 (CFLFLYILNAAALLLSTSNIV). The Extracellular segment spans residues 269–273 (DASLF). The chain crosses the membrane as a helical span at residues 274–294 (WSIVIRIVLPVYPAGHSVLLI). Over 295–319 (QNNPGLRRTWKHLQSQIHLYLQNRF) the chain is Cytoplasmic.

This sequence belongs to the G-protein coupled receptor T2R family.

The protein localises to the membrane. In terms of biological role, putative taste receptor which may play a role in the perception of bitterness. The polypeptide is Taste receptor type 2 member 39 (Tas2r39) (Mus musculus (Mouse)).